We begin with the raw amino-acid sequence, 536 residues long: MNITPVSKNTTEPLACIENIDNHIYDYSPSNEEPKYLKRSKSESTTKLSRQLPRTPSNKYHARNKRRPYSTTPPISLNIPSSPFIHSEFSLNSSSSESSDLESLPDLSEDRDTPFSSPINRNPLTPNNSFFSFTKKNGPIECLLPKRTQISIFEIPEIVYKIVEFADIQNTAVPQEGTPIRRKPLSSNHALLIYGDKKQAELSLQDHYDEHNNDGMLFNCLQVNKLFNQVTTEIISQKFFFSDEMKLHSFLQNLKITQIKSKPSLFVFHKLFHAKQDIIELIKSHMDFSNLQWLEFYMCPKLLPTPEFLSCGTKIKKIVITGSKVIDDGFLSMVAKKCPNLEVLDIRACELISDSGIYQIAKRCTKLTTVNFGRKNKGNLITDSSICILIRNNPNLKTVGLAGCHITDKTLWDLAIRCSDHLQRLSLNNCPHITNQSIPLILHSNLFKNISVLELRFANQITNFKPIIEFKRRQEFRGISILIEVCESLCLMMREQELEMDKVISQRIFEDISYWANDNNDGDVPYQSFINSRRHK.

Disordered stretches follow at residues 27–77 (YSPS…PISL) and 94–123 (SSSESSDLESLPDLSEDRDTPFSSPINRNP). Over residues 32 to 44 (EEPKYLKRSKSES) the composition is skewed to basic and acidic residues. Polar residues predominate over residues 45–58 (TTKLSRQLPRTPSN). The segment covering 94 to 106 (SSSESSDLESLPD) has biased composition (low complexity). Positions 114–123 (PFSSPINRNP) are enriched in polar residues.

It belongs to the AMN1 family.

It is found in the cytoplasm. The protein localises to the nucleus. Negative regulator of the mitotic exit network (MEN), required for multiple cell cycle checkpoints. Required for daughter cell separation and chromosome stability. Involved in copper sensitivity. This is Antagonist of mitotic exit network protein 1 (AMN1) from Debaryomyces hansenii (strain ATCC 36239 / CBS 767 / BCRC 21394 / JCM 1990 / NBRC 0083 / IGC 2968) (Yeast).